Here is a 209-residue protein sequence, read N- to C-terminus: MTKKPIVVGVTGGSGSGKTSVTKAICDHFSGHSILMIAQDVYYHDQADISFEERLKVNYDHPLAFDTDLLISHIAALRRYETIEKPIYDYEKYTRKQEVEIQEPREVIILEGILILEDKRLRDLMDIKVYVDTDDDIRFIRRLLRDMKERGRTMDSVIDQYLSVVKPMHNEFIEPTKKFADIIIPEGGENHVAIDLMTTKIESILQKHV.

12-19 (GGSGSGKT) is an ATP binding site.

This sequence belongs to the uridine kinase family.

The protein localises to the cytoplasm. It catalyses the reaction uridine + ATP = UMP + ADP + H(+). It carries out the reaction cytidine + ATP = CMP + ADP + H(+). It participates in pyrimidine metabolism; CTP biosynthesis via salvage pathway; CTP from cytidine: step 1/3. It functions in the pathway pyrimidine metabolism; UMP biosynthesis via salvage pathway; UMP from uridine: step 1/1. This chain is Uridine kinase, found in Listeria innocua serovar 6a (strain ATCC BAA-680 / CLIP 11262).